A 316-amino-acid polypeptide reads, in one-letter code: Methionyl-tRNA formyltransferase (316 aa).

112–115 (GLLP) contributes to the (6S)-5,6,7,8-tetrahydrofolate binding site.

It belongs to the Fmt family.

It catalyses the reaction L-methionyl-tRNA(fMet) + (6R)-10-formyltetrahydrofolate = N-formyl-L-methionyl-tRNA(fMet) + (6S)-5,6,7,8-tetrahydrofolate + H(+). Functionally, attaches a formyl group to the free amino group of methionyl-tRNA(fMet). The formyl group appears to play a dual role in the initiator identity of N-formylmethionyl-tRNA by promoting its recognition by IF2 and preventing the misappropriation of this tRNA by the elongation apparatus. This Chlamydia muridarum (strain MoPn / Nigg) protein is Methionyl-tRNA formyltransferase.